We begin with the raw amino-acid sequence, 369 residues long: Integrator complex assembly factor WDR73 (369 aa).

3 WD repeats span residues 74-114 (FIDE…RDVI), 266-306 (AASE…SAMK), and 326-366 (GREP…VHDG).

It belongs to the WD repeat WDR73 family.

It localises to the cytoplasm. The protein localises to the cytoskeleton. It is found in the spindle. The protein resides in the spindle pole. Its subcellular location is the cleavage furrow. Component of a multiprotein complex required for the assembly of the RNA endonuclease module of the integrator complex. Associates with ints9 and ints11 in the cytoplasm, stabilizing the ints9-ints11 heterodimer and blocking the active site of ints11. Brat1 then joins the complex and plugs the active site of ints11, leading to wdr73 release and nuclear import of ints9 and ints11. The sequence is that of Integrator complex assembly factor WDR73 (wdr73) from Xenopus laevis (African clawed frog).